Reading from the N-terminus, the 567-residue chain is MRLSQFHLHTTKETPSDAELTSHRLMLRAGMIRKLASGLYTWSPLGLRVLRKVERIVREEMDRAGAVEFQIPTIQPKELWEQTGRWQKFGPQLLKIKDRKDQVFCYSPTAEEAACDFARSELSSYKQLPVNFYQVQTKFRDEIRPRFGVMRSREFLMKDAYSFHLHDECLVREYENMKSAYSRIFTRLGLDFRMVQADSGAIGGDASQEFHVIADSGEDALVFSTGSDYAANMEAAIAADPAPRAAASEAMRKVDTPTQKTCEDVAALLGIELQRTVKSVALIAGEGEAQQFVLVLVRGDHEVNEIKLAKVAGLDEQRFASEAEIAEYLGSVPGFLGPVAPAKAIRVVADREVAAMSDFVVGANEVGFHLAGVNWGRDLPEPEVADIRNVRAGDRALDGGELKIARGIEVGHVFQLGRKYAEALDATVLDENGKAAVMAMGCYGIGISRVVAAAIEQNHDDAGIIWPDAMAPWQVVVCVINPKGDAAVADAAASLLQELRDAGLDAALDDRGLRPGAMFADMELIGIPHRVVVSERGLGAGTYEYRSRRASEAESLDKATLLQRLQG.

Belongs to the class-II aminoacyl-tRNA synthetase family. ProS type 1 subfamily. Homodimer.

It localises to the cytoplasm. The enzyme catalyses tRNA(Pro) + L-proline + ATP = L-prolyl-tRNA(Pro) + AMP + diphosphate. Functionally, catalyzes the attachment of proline to tRNA(Pro) in a two-step reaction: proline is first activated by ATP to form Pro-AMP and then transferred to the acceptor end of tRNA(Pro). As ProRS can inadvertently accommodate and process non-cognate amino acids such as alanine and cysteine, to avoid such errors it has two additional distinct editing activities against alanine. One activity is designated as 'pretransfer' editing and involves the tRNA(Pro)-independent hydrolysis of activated Ala-AMP. The other activity is designated 'posttransfer' editing and involves deacylation of mischarged Ala-tRNA(Pro). The misacylated Cys-tRNA(Pro) is not edited by ProRS. This is Proline--tRNA ligase from Stenotrophomonas maltophilia (strain K279a).